The following is a 189-amino-acid chain: Adenylate kinase (189 aa).

11–16 (GSGKGT) contacts ATP. Residues 31 to 60 (STGDVLRAEIKNGTELGKTAKGYIDQGQLI) are NMP. AMP is bound by residues T32, R37, 58–60 (QLI), 86–89 (GFPR), and Q93. The LID stretch occupies residues 127 to 137 (KRGKESGRADD). R128 provides a ligand contact to ATP. AMP is bound by residues R134 and R145. G173 contributes to the ATP binding site.

Belongs to the adenylate kinase family. Monomer.

It is found in the cytoplasm. The enzyme catalyses AMP + ATP = 2 ADP. It functions in the pathway purine metabolism; AMP biosynthesis via salvage pathway; AMP from ADP: step 1/1. Functionally, catalyzes the reversible transfer of the terminal phosphate group between ATP and AMP. Plays an important role in cellular energy homeostasis and in adenine nucleotide metabolism. In Bacteroides fragilis (strain ATCC 25285 / DSM 2151 / CCUG 4856 / JCM 11019 / LMG 10263 / NCTC 9343 / Onslow / VPI 2553 / EN-2), this protein is Adenylate kinase.